We begin with the raw amino-acid sequence, 154 residues long: MTRKEIEEIVTEIANPVVNKHSFELVDVEFIKEGSSWYLRIYIDKPGGITIDDCQVVSEEISDILDKEDPIPHSYFLEVSSPGLDRPLKKESDFERFKGELVEVKVFKPIEGKKIFEGELVGYKDNKIIIKKNGNELMEFERDKVALVRRVIKF.

It belongs to the RimP family.

The protein localises to the cytoplasm. Its function is as follows. Required for maturation of 30S ribosomal subunits. The protein is Ribosome maturation factor RimP of Acetivibrio thermocellus (strain ATCC 27405 / DSM 1237 / JCM 9322 / NBRC 103400 / NCIMB 10682 / NRRL B-4536 / VPI 7372) (Clostridium thermocellum).